A 299-amino-acid chain; its full sequence is GTPase Era (299 aa).

The Era-type G domain maps to 5 to 172 (KSGFVSIIGR…IDVLKTYLPE (168 aa)). A G1 region spans residues 13–20 (GRPNVGKS). 13–20 (GRPNVGKS) is a GTP binding site. The segment at 39-43 (QTTRN) is G2. Positions 60 to 63 (DTPG) are G3. GTP contacts are provided by residues 60–64 (DTPGI) and 122–125 (NKID). The segment at 122–125 (NKID) is G4. Residues 151-153 (ISA) are G5. Positions 203–280 (TSEEIPHAIG…YLELWVKVQK (78 aa)) constitute a KH type-2 domain.

It belongs to the TRAFAC class TrmE-Era-EngA-EngB-Septin-like GTPase superfamily. Era GTPase family. In terms of assembly, monomer.

The protein resides in the cytoplasm. It localises to the cell membrane. Functionally, an essential GTPase that binds both GDP and GTP, with rapid nucleotide exchange. Plays a role in 16S rRNA processing and 30S ribosomal subunit biogenesis and possibly also in cell cycle regulation and energy metabolism. The chain is GTPase Era from Staphylococcus haemolyticus (strain JCSC1435).